Here is a 71-residue protein sequence, read N- to C-terminus: Bacteriocin carnobacteriocin-A (71 aa).

A propeptide spanning residues 1-18 is cleaved from the precursor; it reads MNNVKELSIKEMQQVTGG. An intrachain disulfide couples cysteine 40 to cysteine 69.

The protein localises to the secreted. In terms of biological role, has antibacterial activity. The protein is Bacteriocin carnobacteriocin-A (cbnBA) of Carnobacterium maltaromaticum (Carnobacterium piscicola).